Reading from the N-terminus, the 300-residue chain is C-5 sterol desaturase (300 aa).

Helical transmembrane passes span 3–23, 68–88, 91–111, and 147–167; these read DPVL…WTAA, SLAL…QLSA, WYTW…YHRI, and ILMW…FCSW. One can recognise a Fatty acid hydroxylase domain in the interval 94-227; that stretch reads WVIAIVGVDL…LIIWDRLFGS (134 aa).

This sequence belongs to the sterol desaturase family.

Its subcellular location is the cell membrane. This is C-5 sterol desaturase (erg3) from Mycobacterium bovis (strain ATCC BAA-935 / AF2122/97).